The following is a 277-amino-acid chain: Urease accessory protein UreD (277 aa).

The protein belongs to the UreD family. As to quaternary structure, ureD, UreF and UreG form a complex that acts as a GTP-hydrolysis-dependent molecular chaperone, activating the urease apoprotein by helping to assemble the nickel containing metallocenter of UreC. The UreE protein probably delivers the nickel.

Its subcellular location is the cytoplasm. Functionally, required for maturation of urease via the functional incorporation of the urease nickel metallocenter. This is Urease accessory protein UreD from Sinorhizobium medicae (strain WSM419) (Ensifer medicae).